A 214-amino-acid chain; its full sequence is Protein get-1 (214 aa).

The Lumenal segment spans residues 1 to 4; the sequence is MPSL. Residues 5–24 traverse the membrane as a helical segment; sequence LVVIFVIELFVQLVNTIGAA. The Cytoplasmic portion of the chain corresponds to 25 to 110; it reads TINNLLWRIA…KFDRTLTTVR (86 aa). Residues 73 to 107 adopt a coiled-coil conformation; that stretch reads KWARLRRQHDKLLEDLEKRKKELDAAKTKFDRTLT. Residues 111 to 131 form a helical membrane-spanning segment; the sequence is VVATRGLQWFLPFWYSREPMF. The Lumenal portion of the chain corresponds to 132–155; the sequence is WLPYGWFPYYVEWFASFPRAPLGS. A helical membrane pass occupies residues 156 to 172; the sequence is VSIVVWQWACTGVIKLV. The Cytoplasmic portion of the chain corresponds to 173–214; that stretch reads IETVMAVVGLIVAARQKQQEKQKAKQAVPAAGGGDSKAEEAK. The segment at 190 to 214 is disordered; it reads QQEKQKAKQAVPAAGGGDSKAEEAK.

Belongs to the WRB/GET1 family. In terms of assembly, interacts with GET3.

Its subcellular location is the endoplasmic reticulum membrane. Its function is as follows. Required for the post-translational delivery of tail-anchored (TA) proteins to the endoplasmic reticulum. Acts as a membrane receptor for soluble GET3, which recognizes and selectively binds the transmembrane domain of TA proteins in the cytosol. This is Protein get-1 (get-1) from Neurospora crassa (strain ATCC 24698 / 74-OR23-1A / CBS 708.71 / DSM 1257 / FGSC 987).